The sequence spans 343 residues: Sulfate/thiosulfate import ATP-binding protein CysA (343 aa).

The ABC transporter domain occupies 3–233 (ILIENISKTF…PATPFVMGFM (231 aa)). 35–42 (GPSGSGKS) lines the ATP pocket.

This sequence belongs to the ABC transporter superfamily. Sulfate/tungstate importer (TC 3.A.1.6) family.

The protein localises to the plastid. It localises to the chloroplast. The enzyme catalyses sulfate(out) + ATP + H2O = sulfate(in) + ADP + phosphate + H(+). It carries out the reaction thiosulfate(out) + ATP + H2O = thiosulfate(in) + ADP + phosphate + H(+). Functionally, part of the ABC transporter complex involved in sulfate/thiosulfate import. Responsible for energy coupling to the transport system. The polypeptide is Sulfate/thiosulfate import ATP-binding protein CysA (Nephroselmis olivacea (Green alga)).